The chain runs to 486 residues: ATP synthase subunit beta 2 (486 aa).

Position 166–173 (166–173) interacts with ATP; the sequence is GGAGVGKT.

It belongs to the ATPase alpha/beta chains family. F-type ATPases have 2 components, CF(1) - the catalytic core - and CF(0) - the membrane proton channel. CF(1) has five subunits: alpha(3), beta(3), gamma(1), delta(1), epsilon(1). CF(0) has three main subunits: a(1), b(2) and c(9-12). The alpha and beta chains form an alternating ring which encloses part of the gamma chain. CF(1) is attached to CF(0) by a central stalk formed by the gamma and epsilon chains, while a peripheral stalk is formed by the delta and b chains.

It is found in the cell inner membrane. It catalyses the reaction ATP + H2O + 4 H(+)(in) = ADP + phosphate + 5 H(+)(out). Its function is as follows. Produces ATP from ADP in the presence of a proton gradient across the membrane. The catalytic sites are hosted primarily by the beta subunits. The chain is ATP synthase subunit beta 2 from Gluconobacter oxydans (strain 621H) (Gluconobacter suboxydans).